A 444-amino-acid chain; its full sequence is Probable glycine dehydrogenase (decarboxylating) subunit 1 (444 aa).

Belongs to the GcvP family. N-terminal subunit subfamily. The glycine cleavage system is composed of four proteins: P, T, L and H. In this organism, the P 'protein' is a heterodimer of two subunits.

The enzyme catalyses N(6)-[(R)-lipoyl]-L-lysyl-[glycine-cleavage complex H protein] + glycine + H(+) = N(6)-[(R)-S(8)-aminomethyldihydrolipoyl]-L-lysyl-[glycine-cleavage complex H protein] + CO2. In terms of biological role, the glycine cleavage system catalyzes the degradation of glycine. The P protein binds the alpha-amino group of glycine through its pyridoxal phosphate cofactor; CO(2) is released and the remaining methylamine moiety is then transferred to the lipoamide cofactor of the H protein. This chain is Probable glycine dehydrogenase (decarboxylating) subunit 1, found in Moorella thermoacetica (strain ATCC 39073 / JCM 9320).